Here is a 520-residue protein sequence, read N- to C-terminus: UBX domain-containing protein 11 (520 aa).

The disordered stretch occupies residues 1–26; sequence MSSPLASLSKTRKVPLPSEPMNPGRR. Residues 76 to 149 adopt a coiled-coil conformation; that stretch reads MAFMTRKLWD…VREMERFLSD (74 aa). Residues 230 to 294 enclose the SEP domain; the sequence is LEPIPLKLYR…VSDLRNQVYL (65 aa). The UBX domain occupies 392–469; it reads PAPPLSMLRI…GLVPKAALLL (78 aa). Residues 476–520 form a disordered region; sequence KSSLKFSPGPCPGPGPGPSPGPGPGPSPGPGPGPSPCPGPSPSPQ. Pro residues predominate over residues 484–520; sequence GPCPGPGPGPSPGPGPGPSPGPGPGPSPCPGPSPSPQ. 3 repeat units span residues 487–494, 495–502, and 503–510. The tract at residues 487 to 510 is 3 X 8 AA tandem repeats of P-G-P-G-P-G-P-S; the sequence is PGPGPGPSPGPGPGPSPGPGPGPS.

In terms of assembly, interacts with GNA12, GNA13, RND1, RND2 and RND3.

It is found in the cytoplasm. The protein localises to the cytoskeleton. In terms of biological role, may be involved in the reorganization of actin cytoskeleton mediated by RND1, RND2 and RND3. Promotes RHOA activation mediated by GNA12 and GNA13. This chain is UBX domain-containing protein 11 (UBXN11), found in Homo sapiens (Human).